Consider the following 23-residue polypeptide: Phallacidin proprotein (23 aa).

A propeptide is located at residue P1. The segment at residues 2–8 (AWLVDCP) is a cross-link (cyclopeptide (Ala-Pro)). A cross-link (2'-cysteinyl-6'-hydroxytryptophan sulfoxide (Trp-Cys)) is located at residues 3 to 7 (WLVDC). Residues 9 to 23 (CVGDDISRLLTRGEK) constitute a propeptide that is removed on maturation.

The protein belongs to the MSDIN fungal toxin family. In terms of processing, processed by the macrocyclase-peptidase enzyme POPB to yield a toxic cyclic heptapeptide. POPB first removes 10 residues from the N-terminus. Conformational trapping of the remaining peptide forces the enzyme to release this intermediate rather than proceed to macrocyclization. The enzyme rebinds the remaining peptide in a different conformation and catalyzes macrocyclization of the N-terminal 7 residues.

Its function is as follows. Major toxin that belongs to the bicyclic heptapeptides called phallotoxins. Although structurally related to amatoxins, phallotoxins have a different mode of action, which is the stabilization of F-actin. Phallotoxins are poisonous when administered parenterally, but not orally because of poor absorption. The polypeptide is Phallacidin proprotein (Amanita rimosa).